Reading from the N-terminus, the 184-residue chain is Oligoribonuclease (184 aa).

The Exonuclease domain maps to 8-169; sequence LIWIDLEMTG…EDIHESIIEL (162 aa). The active site involves tyrosine 129.

The protein belongs to the oligoribonuclease family.

The protein localises to the cytoplasm. Functionally, 3'-to-5' exoribonuclease specific for small oligoribonucleotides. The protein is Oligoribonuclease of Buchnera aphidicola subsp. Schizaphis graminum (strain Sg).